Here is a 494-residue protein sequence, read N- to C-terminus: UDP-glucose 6-dehydrogenase (494 aa).

Residues 11 to 16, Asp36, Arg41, 89 to 93, and 130 to 132 contribute to the NAD(+) site; these read GAGYVG, VNTPT, and STV. The tract at residues 88-110 is disordered; the sequence is SVNTPTKTYGMGKGRAADLKYIE. Residues 129-135 form an allosteric switch region region; it reads KSTVPVR. Residue Glu161 is the Proton donor/acceptor of the active site. Substrate-binding positions include 161-165, 220-224, Arg260, and 267-273; these read EFLAE, KLAAN, and KASVGFG. Position 165 (Glu165) interacts with NAD(+). The active-site Proton donor/acceptor is Lys220. Cys276 (nucleophile) is an active-site residue. NAD(+) is bound at residue 276–279; sequence CFQK. Residues 321-325 are important for formation of active hexamer structure; sequence SLFNT. 338–339 is a substrate binding site; it reads FK. An NAD(+)-binding site is contributed by Arg346. Residue Arg442 participates in substrate binding. The segment at 466 to 494 is disordered; that stretch reads VSAKRIPFASSCEIPKFSLQDPPVKKPRV.

It belongs to the UDP-glucose/GDP-mannose dehydrogenase family. Homohexamer.

The enzyme catalyses UDP-alpha-D-glucose + 2 NAD(+) + H2O = UDP-alpha-D-glucuronate + 2 NADH + 3 H(+). Its pathway is nucleotide-sugar biosynthesis; UDP-alpha-D-glucuronate biosynthesis; UDP-alpha-D-glucuronate from UDP-alpha-D-glucose: step 1/1. UDP-alpha-D-xylose (UDX) acts as a feedback inhibitor. It binds at the same site as the substrate, but functions as allosteric inhibitor by triggering a conformation change that disrupts the active hexameric ring structure and gives rise to an inactive, horseshoe-shaped hexamer. Catalyzes the formation of UDP-alpha-D-glucuronate, a constituent of complex glycosaminoglycans. Required for the biosynthesis of chondroitin sulfate and heparan sulfate. Required for embryonic development via its role in the biosynthesis of glycosaminoglycans. In Gallus gallus (Chicken), this protein is UDP-glucose 6-dehydrogenase (UGDH).